The primary structure comprises 466 residues: Cysteine--tRNA ligase (466 aa).

Cys29 serves as a coordination point for Zn(2+). The 'HIGH' region signature appears at 31–41; sequence ATVQAAPHIGH. Residues Cys208, His233, and Glu237 each contribute to the Zn(2+) site. The short motif at 264-268 is the 'KMSKS' region element; sequence KMSKS. Position 267 (Lys267) interacts with ATP.

This sequence belongs to the class-I aminoacyl-tRNA synthetase family. In terms of assembly, monomer. Zn(2+) is required as a cofactor.

The protein resides in the cytoplasm. It carries out the reaction tRNA(Cys) + L-cysteine + ATP = L-cysteinyl-tRNA(Cys) + AMP + diphosphate. This Streptomyces avermitilis (strain ATCC 31267 / DSM 46492 / JCM 5070 / NBRC 14893 / NCIMB 12804 / NRRL 8165 / MA-4680) protein is Cysteine--tRNA ligase.